The sequence spans 461 residues: METLFNKKLTVGGRDQESTGFAWWAGNARLINVSGKLLGAHVAHAGLIVFWTGAMNLFEVAHFVPQKPMYEQGLILLPHLATLGFGVGFDGIVLDTYPFFVCGVLHLISSAVLGFGGVFHSLAGPDTLEESFRFFGYTWKRKKKLAAILGIHLCFLGLGALLLAWKAMYGGGVYDTWWPGGGDVRSITNPTLNPFIIFGYLVKSPFGGEGWIVSVDSMEYVIGGHIWIGILLVSGGFWHICSRPSPWVVRTFVWSGEAYLSYSLGAVATMGFIAVPMVWFNNTVYPSEFYGPTGPEASQAQAFTFLIRDQRLGTNIASAQGPTGLGKYLMKSPTGEIIFGGETMRFWDFRGPWLEPLRGPNGLDLNKLKNDVQPWQERRAAEYMTHAPLGSLNSVGGVATEINAVNFVNPRSWLATSHFVLAFFFFVGHLWHAGRARAAAIGFEKGIDRSREIARKLKPLD.

Positions Met-1 to Glu-2 are excised as a propeptide. Thr-3 bears the N-acetylthreonine mark. Position 3 is a phosphothreonine (Thr-3). A run of 5 helical transmembrane segments spans residues Leu-57–Ala-81, Leu-122–Lys-143, Lys-166–Thr-188, Arg-243–Ser-263, and Trp-279–Ala-300. Residue Glu-355 coordinates [CaMn4O5] cluster. A helical membrane pass occupies residues Arg-435–Pro-459.

It belongs to the PsbB/PsbC family. PsbC subfamily. PSII is composed of 1 copy each of membrane proteins PsbA, PsbB, PsbC, PsbD, PsbE, PsbF, PsbH, PsbI, PsbJ, PsbK, PsbL, PsbM, PsbT, PsbY, PsbZ, Psb30/Ycf12, at least 3 peripheral proteins of the oxygen-evolving complex and a large number of cofactors. It forms dimeric complexes. Binds multiple chlorophylls and provides some of the ligands for the Ca-4Mn-5O cluster of the oxygen-evolving complex. It may also provide a ligand for a Cl- that is required for oxygen evolution. PSII binds additional chlorophylls, carotenoids and specific lipids. serves as cofactor.

The protein localises to the plastid. It is found in the chloroplast thylakoid membrane. Functionally, one of the components of the core complex of photosystem II (PSII). It binds chlorophyll and helps catalyze the primary light-induced photochemical processes of PSII. PSII is a light-driven water:plastoquinone oxidoreductase, using light energy to abstract electrons from H(2)O, generating O(2) and a proton gradient subsequently used for ATP formation. In Euglena gracilis, this protein is Photosystem II CP43 reaction center protein.